A 517-amino-acid chain; its full sequence is Endoglycoceramidase (517 aa).

The first 17 residues, 1-17, serve as a signal peptide directing secretion; it reads MISVALIILFLAKVISG. N-linked (GlcNAc...) asparagine glycosylation is present at Asn-99. Glu-230 acts as the Proton donor in catalysis. N-linked (GlcNAc...) asparagine glycosylation is found at Asn-298, Asn-380, and Asn-393.

Belongs to the glycosyl hydrolase 5 (cellulase A) family. Expressed uniformly in digestive cells, tentacles and peduncle regions suggesting expression in the endoderm throughout the whole body (at protein level).

It is found in the secreted. The catalysed reaction is an oligoglycosyl-(1-&gt;4)-beta-D-glucosyl-(1&lt;-&gt;1)-ceramide + H2O = an oligoglycosyl-(1-&gt;4)-D-glucose + an N-acyl-sphingoid base. Cu(2+), zinc, manganese, calcium, magnesium and EDTA have no significant effects on enzyme activity. Enzyme requires presence of detergents such as Triton X-100 and Lubrol PX for the hydrolysis of glycosphingolipids. Taurodeoxycholate strongly inhibits the enzyme activity. In terms of biological role, hydrolysis of the glycosidic linkage between oligosaccharides and ceramides of glycosphingolipids, optimal substrates appear to be the glycosphingolipids with a gangliotetraose structure. The chain is Endoglycoceramidase from Hydra vulgaris (Hydra).